We begin with the raw amino-acid sequence, 505 residues long: Glycerol kinase (505 aa).

An ADP-binding site is contributed by T15. ATP-binding residues include T15, T16, and S17. Residue T15 participates in sn-glycerol 3-phosphate binding. R19 is an ADP binding site. Sn-glycerol 3-phosphate-binding residues include R85, E86, Y136, and D249. Positions 85, 86, 136, 249, and 250 each coordinate glycerol. Residues T271 and G314 each contribute to the ADP site. 4 residues coordinate ATP: T271, G314, Q318, and G415. 2 residues coordinate ADP: G415 and N419.

Belongs to the FGGY kinase family.

It carries out the reaction glycerol + ATP = sn-glycerol 3-phosphate + ADP + H(+). Its pathway is polyol metabolism; glycerol degradation via glycerol kinase pathway; sn-glycerol 3-phosphate from glycerol: step 1/1. With respect to regulation, inhibited by fructose 1,6-bisphosphate (FBP). Functionally, key enzyme in the regulation of glycerol uptake and metabolism. Catalyzes the phosphorylation of glycerol to yield sn-glycerol 3-phosphate. The protein is Glycerol kinase of Mycoplasma mycoides subsp. mycoides SC (strain CCUG 32753 / NCTC 10114 / PG1).